Consider the following 165-residue polypeptide: Ribonuclease H2 subunit C (165 aa).

At Met1 the chain carries N-acetylmethionine.

Belongs to the RNase H2 subunit C family. In terms of assembly, the RNase H2 complex is a heterotrimer composed of the catalytic subunit RNASEH2A and the non-catalytic subunits RNASEH2B and RNASEH2C.

Its subcellular location is the nucleus. Non catalytic subunit of RNase H2, an endonuclease that specifically degrades the RNA of RNA:DNA hybrids. Participates in DNA replication, possibly by mediating the removal of lagging-strand Okazaki fragment RNA primers during DNA replication. Mediates the excision of single ribonucleotides from DNA:RNA duplexes. The chain is Ribonuclease H2 subunit C (RNASEH2C) from Bos taurus (Bovine).